Here is a 494-residue protein sequence, read N- to C-terminus: Hydroxyneurosporene desaturase (494 aa).

Belongs to the carotenoid/retinoid oxidoreductase family.

It catalyses the reaction rhodopin + A = (3E)-3,4-didehydrorhodopin + AH2. Its pathway is carotenoid biosynthesis; spheroidene biosynthesis. In terms of biological role, catalyzes the introduction of C-3,4 double bonds into 1-hydroxyneurosporene (1-HO-Neu) to yield demethylspheroidene (DMS). The chain is Hydroxyneurosporene desaturase (crtD) from Rhodobacter capsulatus (strain ATCC BAA-309 / NBRC 16581 / SB1003).